The primary structure comprises 229 residues: MEYAAIVLAAGQGKRMKAGMNKQLIDLNGIPLIVHSLRLFEEDAACKAIWLVVSETERQTMEKLVAEYQIGKVKGLVNGGAERQDSVYAGLKGMEEAEIVLIHDGARPFVAKPILTKLADEAAQSGAAIAAVPVKDTVKLADKNSVARTVERKNLWAAQTPQAFQYELVLAAHEDAKKHGFLGTDDASLVERLDKRVTIVESDYLNIKLTTEEDLLFAETILKKRENQL.

Belongs to the IspD/TarI cytidylyltransferase family. IspD subfamily.

The catalysed reaction is 2-C-methyl-D-erythritol 4-phosphate + CTP + H(+) = 4-CDP-2-C-methyl-D-erythritol + diphosphate. It functions in the pathway isoprenoid biosynthesis; isopentenyl diphosphate biosynthesis via DXP pathway; isopentenyl diphosphate from 1-deoxy-D-xylulose 5-phosphate: step 2/6. Its function is as follows. Catalyzes the formation of 4-diphosphocytidyl-2-C-methyl-D-erythritol from CTP and 2-C-methyl-D-erythritol 4-phosphate (MEP). The polypeptide is 2-C-methyl-D-erythritol 4-phosphate cytidylyltransferase (Shouchella clausii (strain KSM-K16) (Alkalihalobacillus clausii)).